A 579-amino-acid polypeptide reads, in one-letter code: Laccase (579 aa).

A signal peptide (tat-type signal) is located at residues 1–31 (MTDWSRRRFLQTGAALGIAGTLPQTTTEVSA). Residues 82-214 (WGFDGSYPGP…AGLLGLYSIT (133 aa)) enclose the Plastocyanin-like 1 domain. Cu cation is bound by residues histidine 145, histidine 147, histidine 192, and histidine 194. The interval 372–401 (VSDPSTPPEDASADPTSLSLPTPASYDESD) is disordered. A Plastocyanin-like 2 domain is found at 423–530 (LNGHVFGDED…NKMMIPFVVE (108 aa)). Asparagine 449 carries an N-linked (GlcNAc...) asparagine glycan. The Cu cation site is built by histidine 455, histidine 458, histidine 460, histidine 512, cysteine 513, histidine 514, histidine 518, and methionine 523. N-linked (GlcNAc...) asparagine glycosylation is present at asparagine 557.

It belongs to the multicopper oxidase family. Cu(2+) serves as cofactor. In terms of processing, exported by the Tat system. Post-translationally, glycosylated.

Its subcellular location is the secreted. The catalysed reaction is 4 hydroquinone + O2 = 4 benzosemiquinone + 2 H2O. Inhibited by 1 mM NaN(3), 10 mM thiourea, 10 mM 1,10-phenanthroline, 0.1 mM DL-dithiothreitol (DTT) and 1 mM L-cysteine. The inhibition by DTT and L-cysteine is likely caused by reduction of the oxidized substrate and not by inhibition of the enzyme. In terms of biological role, catalyzes the oxidation of a wide variety of organic substrates, including bilirubin, syringaldazine (SGZ), 2,2'-azino-di-(3-ethylbenzothiazoline)-6-sulfonic acid (ABTS) and dimethoxyphenol (DMP). No oxidation of Fe(2+) or guaiacol. The sequence is that of Laccase (lccA) from Haloferax volcanii (strain ATCC 29605 / DSM 3757 / JCM 8879 / NBRC 14742 / NCIMB 2012 / VKM B-1768 / DS2) (Halobacterium volcanii).